Here is a 357-residue protein sequence, read N- to C-terminus: Protein RecA (357 aa).

ATP is bound at residue 67 to 74 (GPESSGKT). The segment at 332-357 (PSAMSSSSSDDENSEGNVDFETGEVF) is disordered.

The protein belongs to the RecA family.

The protein resides in the cytoplasm. Its function is as follows. Can catalyze the hydrolysis of ATP in the presence of single-stranded DNA, the ATP-dependent uptake of single-stranded DNA by duplex DNA, and the ATP-dependent hybridization of homologous single-stranded DNAs. It interacts with LexA causing its activation and leading to its autocatalytic cleavage. In Shewanella sp. (strain ANA-3), this protein is Protein RecA.